A 330-amino-acid polypeptide reads, in one-letter code: Type II restriction enzyme Cfr9I (330 aa).

The protein belongs to the XcyI type II restriction endonuclease family. The cofactor is Mg(2+).

The catalysed reaction is Endonucleolytic cleavage of DNA to give specific double-stranded fragments with terminal 5'-phosphates.. Functionally, an E and P subtype restriction enzyme that recognizes the double-stranded sequence 5'-CCCGGG-3' and cleaves after C-1. The polypeptide is Type II restriction enzyme Cfr9I (cfr9IR) (Citrobacter freundii).